The sequence spans 339 residues: UDP-N-acetylglucosamine--N-acetylmuramyl-(pentapeptide) pyrophosphoryl-undecaprenol N-acetylglucosamine transferase (339 aa).

UDP-N-acetyl-alpha-D-glucosamine-binding positions include 11–13, Asn127, Arg170, Ser188, Ile235, and Gln280; that span reads TGG.

This sequence belongs to the glycosyltransferase 28 family. MurG subfamily.

The protein resides in the cell inner membrane. The enzyme catalyses di-trans,octa-cis-undecaprenyl diphospho-N-acetyl-alpha-D-muramoyl-L-alanyl-D-glutamyl-meso-2,6-diaminopimeloyl-D-alanyl-D-alanine + UDP-N-acetyl-alpha-D-glucosamine = di-trans,octa-cis-undecaprenyl diphospho-[N-acetyl-alpha-D-glucosaminyl-(1-&gt;4)]-N-acetyl-alpha-D-muramoyl-L-alanyl-D-glutamyl-meso-2,6-diaminopimeloyl-D-alanyl-D-alanine + UDP + H(+). The protein operates within cell wall biogenesis; peptidoglycan biosynthesis. Its function is as follows. Cell wall formation. Catalyzes the transfer of a GlcNAc subunit on undecaprenyl-pyrophosphoryl-MurNAc-pentapeptide (lipid intermediate I) to form undecaprenyl-pyrophosphoryl-MurNAc-(pentapeptide)GlcNAc (lipid intermediate II). The sequence is that of UDP-N-acetylglucosamine--N-acetylmuramyl-(pentapeptide) pyrophosphoryl-undecaprenol N-acetylglucosamine transferase from Thermotoga maritima (strain ATCC 43589 / DSM 3109 / JCM 10099 / NBRC 100826 / MSB8).